A 334-amino-acid polypeptide reads, in one-letter code: MKVNITNLYGMSGQSTALIAQNDVTKLAKQLGFNELSFYFYDIYSDSQSELSRRLDGIMASVGYGDVVIYQSPTWNGREFDQAFISKLKILQAKLITFIHDVPPLMFPSNYYLMPEYIDMYNQSDAVIVPSEQMRDKLLAEGLTVNKILIQRMWDHPYDLPLHQPQFAPKLYFAGSVERFPHLINWSYATPLEIFSPEEESNPEANVSYCGWVSRPELLLELSKGGLGLVWGVEDNPADEPEYYGLNISHKSATYLAAGIPVIVPSYLSNAELIRERGLGFVVDSLEEASRIVENLTVEEYQDMVERVRKFSFLLKEGYFSKKVLIDAVMEVLS.

Residues T16, R179, and 249 to 254 (SHKSAT) each bind UDP.

It belongs to the Gtf3 glucosyltransferase family. Homotetramer; a dimer of dimers.

The protein operates within protein modification; protein glycosylation. Required for polymorphic O-glycosylation of the serine-rich repeat protein in this bacteria. Catalyzes the second step in glycosylation by transferring glucose from UDP-glucose to the terminal GlcNAc moiety of the 3-O-(N-acetyl-alpha-D-glucosaminyl)-L-seryl-[protein] resulting from the first glycosylation step. In terms of biological role, part of the accessory SecA2/SecY2 system specifically required to export GspB, a serine-rich repeat cell wall protein encoded upstream in the same operon. The polypeptide is Glucosyltransferase 3 (Streptococcus gordonii).